The chain runs to 224 residues: Cytidylate kinase (224 aa).

11–19 lines the ATP pocket; the sequence is GPAAAGKST.

This sequence belongs to the cytidylate kinase family. Type 1 subfamily.

The protein localises to the cytoplasm. It catalyses the reaction CMP + ATP = CDP + ADP. The enzyme catalyses dCMP + ATP = dCDP + ADP. The polypeptide is Cytidylate kinase (Listeria monocytogenes serotype 4b (strain CLIP80459)).